We begin with the raw amino-acid sequence, 282 residues long: Large ribosomal subunit protein uL4c (282 aa).

The transit peptide at methionine 1 to serine 43 directs the protein to the chloroplast. Disordered regions lie at residues arginine 86–valine 133 and arginine 251–glutamate 282. Residues glutamate 255 to glutamate 282 are compositionally biased toward acidic residues.

It belongs to the universal ribosomal protein uL4 family. As to quaternary structure, part of the 50S ribosomal subunit.

Its subcellular location is the plastid. The protein resides in the chloroplast. This protein binds directly and specifically to 23S rRNA. May play a role in plastid transcriptional regulation. This is Large ribosomal subunit protein uL4c (RPL4) from Nicotiana tabacum (Common tobacco).